Consider the following 290-residue polypeptide: Pantothenate synthetase (290 aa).

30–37 is a binding site for ATP; it reads MGALHEGH. Histidine 37 serves as the catalytic Proton donor. Residue glutamine 61 coordinates (R)-pantoate. Glutamine 61 contacts beta-alanine. 147-150 lines the ATP pocket; that stretch reads GEKD. Position 153 (glutamine 153) interacts with (R)-pantoate. Residues valine 176 and 184–187 each bind ATP; that span reads KSSR.

The protein belongs to the pantothenate synthetase family. In terms of assembly, homodimer.

It localises to the cytoplasm. The enzyme catalyses (R)-pantoate + beta-alanine + ATP = (R)-pantothenate + AMP + diphosphate + H(+). The protein operates within cofactor biosynthesis; (R)-pantothenate biosynthesis; (R)-pantothenate from (R)-pantoate and beta-alanine: step 1/1. Its function is as follows. Catalyzes the condensation of pantoate with beta-alanine in an ATP-dependent reaction via a pantoyl-adenylate intermediate. The protein is Pantothenate synthetase of Chlorobium chlorochromatii (strain CaD3).